A 440-amino-acid chain; its full sequence is Xaa-Pro dipeptidase (440 aa).

Residues aspartate 244, aspartate 255, histidine 335, glutamate 380, and glutamate 419 each coordinate Mn(2+).

This sequence belongs to the peptidase M24B family. Bacterial-type prolidase subfamily. Requires Mn(2+) as cofactor.

It catalyses the reaction Xaa-L-Pro dipeptide + H2O = an L-alpha-amino acid + L-proline. Its function is as follows. Splits dipeptides with a prolyl residue in the C-terminal position. The chain is Xaa-Pro dipeptidase from Shewanella denitrificans (strain OS217 / ATCC BAA-1090 / DSM 15013).